Here is a 544-residue protein sequence, read N- to C-terminus: CTP synthase (544 aa).

Residues 1–266 (MTRFVFITGG…DREVLRHFNL (266 aa)) are amidoligase domain. CTP is bound at residue Ser-13. Ser-13 serves as a coordination point for UTP. ATP is bound at residue 14–19 (SLGKGI). Tyr-54 contributes to the L-glutamine binding site. Residue Asp-71 participates in ATP binding. Mg(2+) is bound by residues Asp-71 and Glu-140. CTP-binding positions include 147 to 149 (DIE), 187 to 192 (KTKPTQ), and Lys-223. UTP contacts are provided by residues 187–192 (KTKPTQ) and Lys-223. Residues 292–543 (KIAIVGKYIT…VAAAVRQARL (252 aa)) enclose the Glutamine amidotransferase type-1 domain. Gly-354 contacts L-glutamine. The active-site Nucleophile; for glutamine hydrolysis is the Cys-381. L-glutamine-binding positions include 382–385 (FGMQ), Glu-405, and Arg-471. Catalysis depends on residues His-516 and Glu-518.

The protein belongs to the CTP synthase family. Homotetramer.

The enzyme catalyses UTP + L-glutamine + ATP + H2O = CTP + L-glutamate + ADP + phosphate + 2 H(+). It catalyses the reaction L-glutamine + H2O = L-glutamate + NH4(+). It carries out the reaction UTP + NH4(+) + ATP = CTP + ADP + phosphate + 2 H(+). The protein operates within pyrimidine metabolism; CTP biosynthesis via de novo pathway; CTP from UDP: step 2/2. Its activity is regulated as follows. Allosterically activated by GTP, when glutamine is the substrate; GTP has no effect on the reaction when ammonia is the substrate. The allosteric effector GTP functions by stabilizing the protein conformation that binds the tetrahedral intermediate(s) formed during glutamine hydrolysis. Inhibited by the product CTP, via allosteric rather than competitive inhibition. Its function is as follows. Catalyzes the ATP-dependent amination of UTP to CTP with either L-glutamine or ammonia as the source of nitrogen. Regulates intracellular CTP levels through interactions with the four ribonucleotide triphosphates. The polypeptide is CTP synthase (Granulibacter bethesdensis (strain ATCC BAA-1260 / CGDNIH1)).